A 225-amino-acid polypeptide reads, in one-letter code: Immune-associated nucleotide-binding protein 1 (225 aa).

The AIG1-type G domain maps to cysteine 6 to lysine 214. The tract at residues glycine 15–serine 22 is G1. Glycine 15 to serine 23 contacts GTP. The segment at aspartate 42–arginine 46 is G2. The tract at residues aspartate 64–glycine 67 is G3. The segment at threonine 134 to aspartate 137 is G4. The G5 stretch occupies residues asparagine 173–lysine 175. Asparagine 174 contacts GTP.

Belongs to the TRAFAC class TrmE-Era-EngA-EngB-Septin-like GTPase superfamily. AIG1/Toc34/Toc159-like paraseptin GTPase family. IAN subfamily. As to expression, mostly expressed in pollen.

The polypeptide is Immune-associated nucleotide-binding protein 1 (Arabidopsis thaliana (Mouse-ear cress)).